Here is a 458-residue protein sequence, read N- to C-terminus: 5-hydroxytryptamine receptor 2C (458 aa).

Residues 1 to 32 (MVNLRNAVHSFLVHLIGLLVWQCDISVSPVAA) form the signal peptide. The Extracellular segment spans residues 33-55 (IVTDIFNTSDGGRFKFPDGVQNW). The helical transmembrane segment at 56 to 80 (PALSIVVIIIMTIGGNILVIMAVSM) threads the bilayer. The Cytoplasmic segment spans residues 81–86 (EKKLHN). A helical transmembrane segment spans residues 87–111 (ATNYFLMSLAIADMLVGLLVMPLSL). Over 112–128 (LAILYDYVWPLPRYLCP) the chain is Extracellular. A disulfide bridge connects residues cysteine 127 and cysteine 207. Residues 129 to 151 (VWISLDVLFSTASIMHLCAISLD) traverse the membrane as a helical segment. Threonine 139 contributes to the ergotamine binding site. The DRY motif; important for ligand-induced conformation changes motif lies at 151–153 (DRY). The Cytoplasmic segment spans residues 152-167 (RYVAIRNPIEHSRFNS). A helical membrane pass occupies residues 168-189 (RTKAIMKIAIVWAISIGVSVPI). At 190–213 (PVIGLRDERKVFVNNTTCVLNDPN) the chain is on the extracellular side. Leucine 209 contributes to the ergotamine binding site. A helical membrane pass occupies residues 214 to 236 (FVLIGSFVAFFIPLTIMVITYCL). The Cytoplasmic portion of the chain corresponds to 237–311 (TIYVLRRQAL…AINNERKASK (75 aa)). The segment at 274–301 (EENSANPNQDQNARRRKKKERRPRGTMQ) is disordered. Positions 287–297 (RRRKKKERRPR) are enriched in basic residues. A helical transmembrane segment spans residues 312–336 (VLGIVFFVFLIMWCPFFITNILSVL). Cysteine 337 and cysteine 341 form a disulfide bridge. Residues 337–347 (CEKSCNQKLME) lie on the Extracellular side of the membrane. A helical membrane pass occupies residues 348 to 370 (KLLNVFVWIGYVCSGINPLVYTL). An NPxxY motif; important for ligand-induced conformation changes and signaling motif is present at residues 364–368 (NPLVY). The Cytoplasmic segment spans residues 371–458 (FNKIYRRAFS…SVVSERISSV (88 aa)). A PDZ-binding motif is present at residues 456–458 (SSV).

The protein belongs to the G-protein coupled receptor 1 family. As to quaternary structure, interacts with MPDZ. Interacts with ARRB2. Interacts with MPP3; this interaction stabilizes the receptor at the plasma membrane and prevents the desensitization of the HTR2C receptor-mediated calcium response.

The protein localises to the cell membrane. In terms of biological role, G-protein coupled receptor for 5-hydroxytryptamine (serotonin). Also functions as a receptor for various drugs and psychoactive substances, including ergot alkaloid derivatives, 1-2,5,-dimethoxy-4-iodophenyl-2-aminopropane (DOI) and lysergic acid diethylamide (LSD). Ligand binding causes a conformation change that triggers signaling via guanine nucleotide-binding proteins (G proteins) and modulates the activity of downstream effectors. HTR2C is coupled to G(q)/G(11) G alpha proteins and activates phospholipase C-beta, releasing diacylglycerol (DAG) and inositol 1,4,5-trisphosphate (IP3) second messengers that modulate the activity of phosphatidylinositol 3-kinase and promote the release of Ca(2+) ions from intracellular stores, respectively. Beta-arrestin family members inhibit signaling via G proteins and mediate activation of alternative signaling pathways. Regulates neuronal activity via the activation of short transient receptor potential calcium channels in the brain, and thereby modulates the activation of pro-opiomelanocortin neurons and the release of CRH that then regulates the release of corticosterone. Plays a role in the regulation of appetite and eating behavior, responses to anxiogenic stimuli and stress. Plays a role in insulin sensitivity and glucose homeostasis. This Pan troglodytes (Chimpanzee) protein is 5-hydroxytryptamine receptor 2C.